A 290-amino-acid chain; its full sequence is uncharacterized protein (290 aa).

Residues 30-274 (PTILLLHGFP…YDTGHFALET (245 aa)) form the AB hydrolase-1 domain. The active site involves His-269.

Belongs to the DmpD/TodF/XylF esterase family.

This is an uncharacterized protein from Saccharomyces cerevisiae (strain ATCC 204508 / S288c) (Baker's yeast).